The primary structure comprises 200 residues: Recombination protein RecR (200 aa).

The C4-type zinc finger occupies 58-75 (CPCCFCLKNFPESQCEFC). The 96-residue stretch at 82–177 (STLCIVASPK…SISRLALGLP (96 aa)) folds into the Toprim domain.

The protein belongs to the RecR family.

Its function is as follows. May play a role in DNA repair. It seems to be involved in an RecBC-independent recombinational process of DNA repair. It may act with RecF and RecO. The sequence is that of Recombination protein RecR from Chlamydia felis (strain Fe/C-56) (Chlamydophila felis).